The following is a 542-amino-acid chain: Thermosome subunit alpha (542 aa).

The protein belongs to the TCP-1 chaperonin family. As to quaternary structure, forms a Heterooligomeric complex of two stacked eight-membered rings.

Its function is as follows. Molecular chaperone; binds unfolded polypeptides in vitro, and has a weak ATPase activity. This is Thermosome subunit alpha (thsA) from Methanothermobacter thermautotrophicus (strain ATCC 29096 / DSM 1053 / JCM 10044 / NBRC 100330 / Delta H) (Methanobacterium thermoautotrophicum).